Here is a 122-residue protein sequence, read N- to C-terminus: Ribosomal silencing factor RsfS (122 aa).

The protein belongs to the Iojap/RsfS family. As to quaternary structure, interacts with ribosomal protein uL14 (rplN).

It localises to the cytoplasm. Functionally, functions as a ribosomal silencing factor. Interacts with ribosomal protein uL14 (rplN), blocking formation of intersubunit bridge B8. Prevents association of the 30S and 50S ribosomal subunits and the formation of functional ribosomes, thus repressing translation. The polypeptide is Ribosomal silencing factor RsfS (Chromobacterium violaceum (strain ATCC 12472 / DSM 30191 / JCM 1249 / CCUG 213 / NBRC 12614 / NCIMB 9131 / NCTC 9757 / MK)).